The sequence spans 242 residues: Biosynthetic peptidoglycan transglycosylase (242 aa).

A helical transmembrane segment spans residues 19–39 (ILAALAVFWGGGIALFSVVPV).

This sequence belongs to the glycosyltransferase 51 family.

Its subcellular location is the cell inner membrane. It carries out the reaction [GlcNAc-(1-&gt;4)-Mur2Ac(oyl-L-Ala-gamma-D-Glu-L-Lys-D-Ala-D-Ala)](n)-di-trans,octa-cis-undecaprenyl diphosphate + beta-D-GlcNAc-(1-&gt;4)-Mur2Ac(oyl-L-Ala-gamma-D-Glu-L-Lys-D-Ala-D-Ala)-di-trans,octa-cis-undecaprenyl diphosphate = [GlcNAc-(1-&gt;4)-Mur2Ac(oyl-L-Ala-gamma-D-Glu-L-Lys-D-Ala-D-Ala)](n+1)-di-trans,octa-cis-undecaprenyl diphosphate + di-trans,octa-cis-undecaprenyl diphosphate + H(+). It participates in cell wall biogenesis; peptidoglycan biosynthesis. Functionally, peptidoglycan polymerase that catalyzes glycan chain elongation from lipid-linked precursors. In Salmonella heidelberg (strain SL476), this protein is Biosynthetic peptidoglycan transglycosylase.